Reading from the N-terminus, the 297-residue chain is CCAAT/enhancer-binding protein beta (297 aa).

Residues 1 to 22 are required for Lys-134 sumoylation; that stretch reads MHRLLAWDAACLPPPPAAFRPM. R3 carries the asymmetric dimethylarginine; by CARM1 modification. The tract at residues 22–105 is required for MYC transcriptional repression; it reads MEVANFYYEP…YGAKPSKKPS (84 aa). K39 carries the post-translational modification N6-acetyllysine; alternate. K39 carries the post-translational modification N6-methylated lysine; alternate. Residues K99 and K102 each carry the N6-acetyllysine; by KAT2A and KAT2B modification. Residue K103 is modified to N6-acetyllysine; by KAT2A and KAT2B; alternate. K103 participates in a covalent cross-link: Glycyl lysine isopeptide (Lys-Gly) (interchain with G-Cter in SUMO2); alternate. A Phosphoserine; by RPS6KA1 and PKC/PRKCA modification is found at S105. A Glycyl lysine isopeptide (Lys-Gly) (interchain with G-Cter in SUMO2); alternate cross-link involves residue K134. K134 participates in a covalent cross-link: Glycyl lysine isopeptide (Lys-Gly) (interchain with G-Cter in SUMO); alternate. Residue K145 forms a Glycyl lysine isopeptide (Lys-Gly) (interchain with G-Cter in SUMO2) linkage. Residues 172 to 201 form a disordered region; that stretch reads SGSSGSLSTSSSSSPPGTPSPADAKAAPAA. Position 180 is a phosphothreonine; by GSK3-beta (T180). Residues S181 and S182 are each glycosylated (O-linked (GlcNAc) serine). S185 carries the post-translational modification Phosphoserine; by GSK3-beta. T189 carries the post-translational modification Phosphothreonine; by RPS6KA1, CDK2 and MAPK. Residues K212 and K214 each participate in a glycyl lysine isopeptide (Lys-Gly) (interchain with G-Cter in SUMO2) cross-link. The bZIP domain maps to 223–286; it reads SDEYKMRRER…STLRNLFKQL (64 aa). Positions 227–247 are basic motif; it reads KMRRERNNIAVRKSRDKAKMR. Residue S240 is modified to Phosphoserine; by PKC/PRKCA. The interval 249–256 is leucine-zipper; that stretch reads LETQHKVL. S277 carries the phosphoserine; by CaMK2 modification. A Glycyl lysine isopeptide (Lys-Gly) (interchain with G-Cter in SUMO2) cross-link involves residue K284.

This sequence belongs to the bZIP family. C/EBP subfamily. Binds DNA as a homodimer and as a heterodimer. Interacts with MYB; within the complex, MYB and CEBPB bind to different promoter regions. Interacts with ATF4. Binds DNA as a heterodimer with ATF4. Can form stable heterodimers with CEBPA, CEBPD, CEBPE and CEBPG. Interacts with SIX1. Isoform 2 and isoform 3 also form heterodimers. Interacts with TRIM28 and PTGES2. Interacts with PRDM16. Interacts with CCDC85B. Forms a complex with THOC5. Interacts with ZNF638; this interaction increases transcriptional activation. Interacts with CIDEA and CIDEC; these interactions increase transcriptional activation of a subset of CEBPB downstream target genes. Interacts with DDIT3/CHOP. Interacts with EP300; recruits EP300 to chromatin. Interacts with RORA; the interaction disrupts interaction with EP300. Interacts (not methylated) with MED23, MED26, SMARCA2, SMARCB1 and SMARCC1. Interacts with KAT2A and KAT2B. Interacts with ATF5; EP300 is required for ATF5 and CEBPB interaction and DNA binding. Interacts with NFE2L1; the heterodimer represses expression of DSPP during odontoblast differentiation. Post-translationally, phosphorylated at Thr-189 by MAPK and CDK2, serves to prime phosphorylation at Thr-180 and Ser-185 by GSK3B and acquire DNA-binding as well as transactivation activities, required to induce adipogenesis. MAPK and CDK2 act sequentially to maintain Thr-189 in the primed phosphorylated state during mitotical cloning expansion and thereby progression of terminal differentiation. Phosphorylation at Ser-105 enhances transactivation activity. Phosphorylation at Ser-277 in response to calcium increases transactivation activity. Phosphorylated at Thr-189 by RPS6KA1. In terms of processing, methylated. Methylation at Arg-3 by CARM1 and at Lys-39 by EHMT2 inhibit transactivation activity. Methylation is probably inhibited by phosphorylation at Thr-189. Sumoylated by polymeric chains of SUMO2 or SUMO3. Sumoylation at Lys-134 is required for inhibition of T-cells proliferation. In adipocytes, sumoylation at Lys-134 by PIAS1 leads to ubiquitination and subsequent proteasomal degradation. Desumoylated by SENP2, which abolishes ubiquitination and stabilizes protein levels. Post-translationally, ubiquitinated, leading to proteasomal degradation. In terms of processing, O-glycosylated, glycosylation at Ser-181 and Ser-182 prevents phosphorylation on Thr-189, Ser-185 and Thr-180 and DNA binding activity which delays the adipocyte differentiation program. Acetylated. Acetylation at Lys-39 is an important and dynamic regulatory event that contributes to its ability to transactivate target genes, including those associated with adipogenesis and adipocyte function. Deacetylation by HDAC1 represses its transactivation activity. Acetylated by KAT2A and KAT2B within a cluster of lysine residues between amino acids 99-103, this acetylation is strongly induced by glucocorticoid treatment and enhances transactivation activity. As to expression, liver and lung.

It is found in the nucleus. The protein localises to the cytoplasm. Functionally, important transcription factor regulating the expression of genes involved in immune and inflammatory responses. Also plays a significant role in adipogenesis, as well as in the gluconeogenic pathway, liver regeneration, and hematopoiesis. The consensus recognition site is 5'-T[TG]NNGNAA[TG]-3'. Its functional capacity is governed by protein interactions and post-translational protein modifications. During early embryogenesis, plays essential and redundant roles with CEBPA. Has a promitotic effect on many cell types such as hepatocytes and adipocytes but has an antiproliferative effect on T-cells by repressing MYC expression, facilitating differentiation along the T-helper 2 lineage. Binds to regulatory regions of several acute-phase and cytokines genes and plays a role in the regulation of acute-phase reaction and inflammation. Also plays a role in intracellular bacteria killing. During adipogenesis, is rapidly expressed and, after activation by phosphorylation, induces CEBPA and PPARG, which turn on the series of adipocyte genes that give rise to the adipocyte phenotype. The delayed transactivation of the CEBPA and PPARG genes by CEBPB appears necessary to allow mitotic clonal expansion and thereby progression of terminal differentiation. Essential for female reproduction because of a critical role in ovarian follicle development. Restricts osteoclastogenesis: together with NFE2L1; represses expression of DSPP during odontoblast differentiation. Essential for gene expression induction in activated macrophages. Plays a major role in immune responses such as CD4(+) T-cell response, granuloma formation and endotoxin shock. Not essential for intracellular bacteria killing. Its function is as follows. Acts as a dominant negative through heterodimerization with isoform 2. Promotes osteoblast differentiation and osteoclastogenesis. In Rattus norvegicus (Rat), this protein is CCAAT/enhancer-binding protein beta.